Reading from the N-terminus, the 62-residue chain is Chromatin protein Cren7 (62 aa).

Belongs to the Cren7 family. As to quaternary structure, monomer. In terms of processing, methylated at multiple sites, to varying extents.

Its subcellular location is the chromosome. The protein localises to the cytoplasm. In terms of biological role, a chromatin protein, binds double-stranded DNA without sequence specificity. Constrains negative DNA supercoils. This chain is Chromatin protein Cren7, found in Staphylothermus marinus (strain ATCC 43588 / DSM 3639 / JCM 9404 / F1).